A 193-amino-acid chain; its full sequence is Cysteine and glycine-rich protein 1 (193 aa).

The LIM zinc-binding 1 domain occupies 10 to 61 (CGVCQKTVYFAEEVQCEGNSFHKSCFLCMVCKKNLDSTTVAVHGEEIYCKSC). Residues 64–69 (KKYGPK) carry the Nuclear localization signal motif. The residue at position 81 (Ser-81) is a Phosphoserine. Lys-84 is modified (N6-acetyllysine). Residue Lys-91 forms a Glycyl lysine isopeptide (Lys-Gly) (interchain with G-Cter in SUMO2) linkage. Residues Lys-112, Lys-131, Lys-137, and Lys-161 each carry the N6-acetyllysine modification. The 52-residue stretch at 119-170 (CPRCSQAVYAAEKVIGAGKSWHKACFRCAKCGKGLESTTLADKDGEIYCKGC) folds into the LIM zinc-binding 2 domain. Residue Ser-192 is modified to Phosphoserine.

In terms of assembly, interacts with ASCC1; ASCC2 and TRIP4.

It localises to the nucleus. In terms of biological role, could play a role in neuronal development. This is Cysteine and glycine-rich protein 1 (CSRP1) from Pongo abelii (Sumatran orangutan).